The primary structure comprises 130 residues: Small ribosomal subunit protein uS9 (130 aa).

The tract at residues 105–130 is disordered; the sequence is TRDARMKERKKPGLKKARKASQFSKR. The span at 111 to 130 shows a compositional bias: basic residues; that stretch reads KERKKPGLKKARKASQFSKR.

Belongs to the universal ribosomal protein uS9 family.

The sequence is that of Small ribosomal subunit protein uS9 from Lactiplantibacillus plantarum (strain ATCC BAA-793 / NCIMB 8826 / WCFS1) (Lactobacillus plantarum).